Here is a 716-residue protein sequence, read N- to C-terminus: Zinc finger protein on ecdysone puffs (716 aa).

2 disordered regions span residues 103–168 and 182–208; these read PSLL…GGIR and KNANQNKKKEPTPGEKKIESPTKESPY. Basic and acidic residues predominate over residues 188-203; the sequence is KKKEPTPGEKKIESPT. At serine 201 the chain carries Phosphoserine. At threonine 203 the chain carries Phosphothreonine. Serine 206 carries the post-translational modification Phosphoserine. Residues 216 to 240 form a C2H2-type 1 zinc finger; it reads FYCHLCKKHMWDANSFENHIKGRTH. A C2H2-type 2; atypical zinc finger spans residues 288–310; the sequence is DYCTMCDLNFHGHISTHRKSEGH. Residues 319 to 343 form a C2H2-type 3 zinc finger; that stretch reads PKCIECNKEFATRIDYDTHLLSAEH. The span at 350-359 shows a compositional bias: basic and acidic residues; the sequence is NNTKVGERKR. Residues 350–447 are disordered; sequence NNTKVGERKR…EEEEVALPVD (98 aa). The short motif at 379–383 is the Nuclear localization signal element; it reads KRKKK. Positions 386–401 are enriched in basic and acidic residues; it reads KKEGEAADGEAKKEGA. The segment covering 405 to 414 has biased composition (acidic residues); that stretch reads EGAEGDEAEG. The span at 415–431 shows a compositional bias: basic and acidic residues; the sequence is EEAKEGEEAADETKEGD. Positions 432–447 are enriched in acidic residues; that stretch reads ELNESQEEEEVALPVD. The segment at 489–513 adopts a C2H2-type 4 zinc-finger fold; it reads YECSVCSKFFDTEVTAEIHSRTATH. Positions 534 to 716 are disordered; the sequence is RAAAALEENE…QRARGRYNRY (183 aa). Positions 541–551 are enriched in basic and acidic residues; the sequence is ENERKKRKVEE. Positions 544–548 match the Nuclear localization signal motif; it reads RKKRK. The segment covering 560–638 has biased composition (acidic residues); the sequence is AAEETTEGAE…GQEGEQEPEP (79 aa). Pro residues predominate over residues 639–656; the sequence is EPAPVQTPAPAEPAPPAK. Low complexity predominate over residues 657–704; that stretch reads TPAKTPTKAAAPAAVASPAAAATSADASPSPAKKATPARAAAGAKATP. Phosphoserine is present on residues serine 673, serine 684, and serine 686. Threonine 692 is modified (phosphothreonine). Over residues 707 to 716 the composition is skewed to basic residues; the sequence is QRARGRYNRY.

Its subcellular location is the nucleus. The protein localises to the chromosome. In terms of biological role, may play a role in the process of early and late gene activation, or possibly in RNA processing, for a defined set of developmentally regulated loci. This is Zinc finger protein on ecdysone puffs (Pep) from Drosophila melanogaster (Fruit fly).